The following is a 497-amino-acid chain: Pentatricopeptide repeat-containing protein At2g36240 (497 aa).

9 PPR repeats span residues 156–186, 192–226, 227–261, 262–296, 297–331, 332–366, 367–401, 402–436, and 437–471; these read LEPI…MKRL, NVGV…RAKP, DVCT…GCEP, NVVS…GCRF, SEAT…RVLP, SEFD…GQTP, CFIA…GILP, DSVT…GYEP, and DETT…DMLP.

Belongs to the PPR family. P subfamily.

In Arabidopsis thaliana (Mouse-ear cress), this protein is Pentatricopeptide repeat-containing protein At2g36240.